A 923-amino-acid polypeptide reads, in one-letter code: ATP-dependent Clp protease ATP-binding subunit ClpA homolog CD4B, chloroplastic (923 aa).

The region spanning 92-234 is the Clp R domain; it reads FERFTEKAIK…RTQVIRMVGE (143 aa). Repeat regions lie at residues 95 to 160 and 170 to 234; these read FTEK…IGRG and FTPR…MVGE. The tract at residues 255 to 502 is i; it reads LEEYGTNLTK…RVRLRHAQLP (248 aa). Residue 300–307 coordinates ATP; it reads GEPGVGKT. The region spanning 509 to 544 is the UVR domain; that stretch reads EKELRQITKEKNEAVRGQDFEKAGELRDREMDLKAQ. Residues 569–760 are II; that stretch reads VTEADIQHIV…LLIMTSNVGS (192 aa). Residue 643-650 participates in ATP binding; it reads GPTGVGKS.

The protein belongs to the ClpA/ClpB family.

The protein resides in the plastid. Its subcellular location is the chloroplast. May interact with a ClpP-like protease involved in degradation of denatured proteins in the chloroplast. This chain is ATP-dependent Clp protease ATP-binding subunit ClpA homolog CD4B, chloroplastic (CD4B), found in Solanum lycopersicum (Tomato).